Consider the following 324-residue polypeptide: Beta-ketoacyl-[acyl-carrier-protein] synthase III (324 aa).

Residues cysteine 112 and histidine 249 contribute to the active site. The ACP-binding stretch occupies residues 250 to 254 (QANDR). The active site involves asparagine 279.

This sequence belongs to the thiolase-like superfamily. FabH family. In terms of assembly, homodimer.

It localises to the cytoplasm. The catalysed reaction is malonyl-[ACP] + acetyl-CoA + H(+) = 3-oxobutanoyl-[ACP] + CO2 + CoA. It functions in the pathway lipid metabolism; fatty acid biosynthesis. Catalyzes the condensation reaction of fatty acid synthesis by the addition to an acyl acceptor of two carbons from malonyl-ACP. Catalyzes the first condensation reaction which initiates fatty acid synthesis and may therefore play a role in governing the total rate of fatty acid production. Possesses both acetoacetyl-ACP synthase and acetyl transacylase activities. Its substrate specificity determines the biosynthesis of branched-chain and/or straight-chain of fatty acids. The sequence is that of Beta-ketoacyl-[acyl-carrier-protein] synthase III from Streptococcus pneumoniae serotype 2 (strain D39 / NCTC 7466).